The following is a 319-amino-acid chain: Coproporphyrin III ferrochelatase 2 (319 aa).

Residues tyrosine 13, arginine 30, 46 to 47 (RY), serine 54, and tyrosine 125 each bind Fe-coproporphyrin III. Residues histidine 181 and glutamate 262 each contribute to the Fe(2+) site.

Belongs to the ferrochelatase family.

Its subcellular location is the cytoplasm. The enzyme catalyses Fe-coproporphyrin III + 2 H(+) = coproporphyrin III + Fe(2+). It functions in the pathway porphyrin-containing compound metabolism; protoheme biosynthesis. Its function is as follows. Involved in coproporphyrin-dependent heme b biosynthesis. Catalyzes the insertion of ferrous iron into coproporphyrin III to form Fe-coproporphyrin III. The protein is Coproporphyrin III ferrochelatase 2 of Bacillus cereus (strain ZK / E33L).